A 291-amino-acid polypeptide reads, in one-letter code: Shikimate dehydrogenase (NADP(+)) (291 aa).

Shikimate contacts are provided by residues 18–20 (SLS) and T70. The Proton acceptor role is filled by K74. Residues N95 and D110 each contribute to the shikimate site. NADP(+) contacts are provided by residues 134-138 (GAGGA) and V228. Y230 contacts shikimate. G251 is a binding site for NADP(+).

The protein belongs to the shikimate dehydrogenase family. In terms of assembly, homodimer.

The catalysed reaction is shikimate + NADP(+) = 3-dehydroshikimate + NADPH + H(+). It functions in the pathway metabolic intermediate biosynthesis; chorismate biosynthesis; chorismate from D-erythrose 4-phosphate and phosphoenolpyruvate: step 4/7. Its function is as follows. Involved in the biosynthesis of the chorismate, which leads to the biosynthesis of aromatic amino acids. Catalyzes the reversible NADPH linked reduction of 3-dehydroshikimate (DHSA) to yield shikimate (SA). This Streptomyces avermitilis (strain ATCC 31267 / DSM 46492 / JCM 5070 / NBRC 14893 / NCIMB 12804 / NRRL 8165 / MA-4680) protein is Shikimate dehydrogenase (NADP(+)).